Consider the following 276-residue polypeptide: uncharacterized protein (276 aa).

10 consecutive transmembrane segments (helical) span residues I5–V25, I31–L51, V63–V83, V89–L109, V119–I139, I142–L162, P168–P188, L200–Y220, A231–A251, and P253–V273. 2 consecutive EamA domains span residues T12–E133 and V150–R274.

Belongs to the EamA transporter family.

The protein localises to the cell membrane. This is an uncharacterized protein from Archaeoglobus fulgidus (strain ATCC 49558 / DSM 4304 / JCM 9628 / NBRC 100126 / VC-16).